A 177-amino-acid chain; its full sequence is Large ribosomal subunit protein uL6 (177 aa).

It belongs to the universal ribosomal protein uL6 family. Part of the 50S ribosomal subunit.

Its function is as follows. This protein binds to the 23S rRNA, and is important in its secondary structure. It is located near the subunit interface in the base of the L7/L12 stalk, and near the tRNA binding site of the peptidyltransferase center. The polypeptide is Large ribosomal subunit protein uL6 (Saccharophagus degradans (strain 2-40 / ATCC 43961 / DSM 17024)).